Consider the following 388-residue polypeptide: Cuticle-degrading protease (388 aa).

Positions 1-18 (MHLSALLTLLPAVLAAPA) are cleaved as a signal peptide. The propeptide occupies 19-107 (TIGRRAEPAP…IEKDAVMRIS (89 aa)). The Inhibitor I9 domain maps to 41–106 (KYIVKFKDDI…FIEKDAVMRI (66 aa)). The Peptidase S8 domain maps to 116–388 (PWGLGRISHR…TVNYLAYNGA (273 aa)). 2 disulfides stabilise this stretch: Cys143–Cys233 and Cys288–Cys360. Active-site charge relay system residues include Asp148 and His179. N-linked (GlcNAc...) asparagine glycosylation is present at Asn296. Ser334 serves as the catalytic Charge relay system.

The protein belongs to the peptidase S8 family.

The protein resides in the secreted. In terms of biological role, capable of breaching the insect cuticle. The sequence is that of Cuticle-degrading protease (PR1) from Metarhizium anisopliae (Entomophthora anisopliae).